We begin with the raw amino-acid sequence, 965 residues long: Valine--tRNA ligase (965 aa).

Positions 1–22 are disordered; that stretch reads MENTPSHINKTEPSLDKTYSPQ. Positions 56-66 match the 'HIGH' region motif; it reads PNVTGSLHMGH. Residues 568-572 carry the 'KMSKS' region motif; the sequence is KMSKS. An ATP-binding site is contributed by Lys571. A coiled-coil region spans residues 896-965; the sequence is LIDKATELDR…IEQQATIAAL (70 aa).

Belongs to the class-I aminoacyl-tRNA synthetase family. ValS type 1 subfamily. Monomer.

It is found in the cytoplasm. The enzyme catalyses tRNA(Val) + L-valine + ATP = L-valyl-tRNA(Val) + AMP + diphosphate. Catalyzes the attachment of valine to tRNA(Val). As ValRS can inadvertently accommodate and process structurally similar amino acids such as threonine, to avoid such errors, it has a 'posttransfer' editing activity that hydrolyzes mischarged Thr-tRNA(Val) in a tRNA-dependent manner. The polypeptide is Valine--tRNA ligase (Yersinia pestis).